The chain runs to 345 residues: RDS/peripherin-like protein xRDS35 (345 aa).

Topologically, residues 1 to 24 are cytoplasmic; the sequence is MVLFKAKFSFQRRVKLAQTLWLLS. Residues 25-43 traverse the membrane as a helical segment; that stretch reads WLSVLVGCLTFGMGIFLKV. Topologically, residues 44-61 are lumenal; sequence QLWIHNEVMENTSAHAVP. Asparagine 54 carries an N-linked (GlcNAc...) asparagine glycan. The chain crosses the membrane as a helical span at residues 62–80; sequence NTVITAGLVGILLGIYAGK. The Cytoplasmic portion of the chain corresponds to 81 to 99; sequence VSQASMDVTKYQRWKSFMM. The chain crosses the membrane as a helical span at residues 100–123; sequence PFFFLAILSCLVCLAALVLSVALR. At 124 to 264 the chain is on the lumenal side; sequence GTLEESLKIG…LSYYTGIMAT (141 aa). A glycan (N-linked (GlcNAc...) asparagine) is linked at asparagine 229. The chain crosses the membrane as a helical span at residues 265–290; that stretch reads NGAAVTLSFLLQASVLVSLRYLHTSM. The Cytoplasmic portion of the chain corresponds to 291–345; the sequence is DKISGPDDMEADTEGFILEKGVTETMNTTLEKMKGLFMSNQVETAEGGGEAAAAS.

This sequence belongs to the PRPH2/ROM1 family. As to quaternary structure, homodimer; disulfide-linked. Rod specific.

Its subcellular location is the membrane. The chain is RDS/peripherin-like protein xRDS35 (rds35) from Xenopus laevis (African clawed frog).